A 217-amino-acid polypeptide reads, in one-letter code: 3-demethoxyubiquinol 3-hydroxylase (217 aa).

Positions 66, 96, 99, 148, 180, and 183 each coordinate Fe cation.

This sequence belongs to the COQ7 family. It depends on Fe cation as a cofactor.

It is found in the cell membrane. It catalyses the reaction a 5-methoxy-2-methyl-3-(all-trans-polyprenyl)benzene-1,4-diol + AH2 + O2 = a 3-demethylubiquinol + A + H2O. It participates in cofactor biosynthesis; ubiquinone biosynthesis. Catalyzes the hydroxylation of 2-nonaprenyl-3-methyl-6-methoxy-1,4-benzoquinol during ubiquinone biosynthesis. This is 3-demethoxyubiquinol 3-hydroxylase from Xanthomonas euvesicatoria pv. vesicatoria (strain 85-10) (Xanthomonas campestris pv. vesicatoria).